The primary structure comprises 747 residues: Pentatricopeptide repeat-containing protein At5g39710 (747 aa).

15 PPR repeats span residues 133–167 (TSSV…GFMP), 168–203 (GVLS…QVSP), 204–238 (NVFT…GCLP), 239–273 (NVVT…GLEP), 274–308 (NLIS…GYSL), 309–343 (DEVT…GLTP), 344–378 (SVIT…GLCP), 379–413 (NERT…GFSP), 414–448 (SVVT…GLSP), 449–483 (DVVS…GIKP), 484–518 (DTIT…GLPP), 519–553 (DEFT…GVLP), 554–588 (DVVT…ESVP), 604–638 (EFKS…NHKP), and 639–673 (DGTA…GFLL).

The protein belongs to the PPR family. P subfamily.

The sequence is that of Pentatricopeptide repeat-containing protein At5g39710 (EMB2745) from Arabidopsis thaliana (Mouse-ear cress).